Reading from the N-terminus, the 704-residue chain is Neutral ceramidase (704 aa).

Positions 1-23 (MANSKMAFLAFLAVSFLCGLVSA) are cleaved as a signal peptide. N-linked (GlcNAc...) asparagine glycosylation is present at N230. S276 acts as the Nucleophile in catalysis. N362, N550, and N598 each carry an N-linked (GlcNAc...) asparagine glycan.

The protein belongs to the neutral ceramidase family. N-glycosylated. As to expression, widely expressed in different tissues but enriched in neurons at all stages of development.

The protein resides in the secreted. The catalysed reaction is an N-acylsphing-4-enine + H2O = sphing-4-enine + a fatty acid. Functionally, hydrolyzes the sphingolipid ceramide into sphingosine and free fatty acid at an optimal pH of 6.5-7.5. Acts as a key regulator of sphingolipid signaling metabolites by generating sphingosine at the cell surface. Regulates synaptic vesicle exocytosis and trafficking by controlling presynaptic terminal sphingolipid composition. The chain is Neutral ceramidase (CDase) from Drosophila melanogaster (Fruit fly).